Here is a 279-residue protein sequence, read N- to C-terminus: Large ribosomal subunit protein uL2 (279 aa).

2 disordered regions span residues 34–58 (LRPL…GGGH) and 225–279 (VMNP…KNKR). The segment covering 251 to 268 (GKPEGRTRRPNKESDKLI) has biased composition (basic and acidic residues). The segment covering 269 to 279 (VRRRRTGKNKR) has biased composition (basic residues).

The protein belongs to the universal ribosomal protein uL2 family. Part of the 50S ribosomal subunit. Forms a bridge to the 30S subunit in the 70S ribosome.

Its function is as follows. One of the primary rRNA binding proteins. Required for association of the 30S and 50S subunits to form the 70S ribosome, for tRNA binding and peptide bond formation. It has been suggested to have peptidyltransferase activity; this is somewhat controversial. Makes several contacts with the 16S rRNA in the 70S ribosome. In Micrococcus luteus (strain ATCC 4698 / DSM 20030 / JCM 1464 / CCM 169 / CCUG 5858 / IAM 1056 / NBRC 3333 / NCIMB 9278 / NCTC 2665 / VKM Ac-2230) (Micrococcus lysodeikticus), this protein is Large ribosomal subunit protein uL2.